Reading from the N-terminus, the 98-residue chain is NADH-ubiquinone oxidoreductase chain 4L (98 aa).

The next 2 helical transmembrane spans lie at 1–21 (MTLI…GLAL) and 48–68 (PLHL…PFAA).

Belongs to the complex I subunit 4L family. Core subunit of respiratory chain NADH dehydrogenase (Complex I) which is composed of 45 different subunits.

The protein resides in the mitochondrion inner membrane. It catalyses the reaction a ubiquinone + NADH + 5 H(+)(in) = a ubiquinol + NAD(+) + 4 H(+)(out). Core subunit of the mitochondrial membrane respiratory chain NADH dehydrogenase (Complex I) which catalyzes electron transfer from NADH through the respiratory chain, using ubiquinone as an electron acceptor. Part of the enzyme membrane arm which is embedded in the lipid bilayer and involved in proton translocation. The polypeptide is NADH-ubiquinone oxidoreductase chain 4L (mt-nd4l) (Xenopus laevis (African clawed frog)).